The primary structure comprises 106 residues: Cell division protein FtsB (106 aa).

Over 1-3 (MGK) the chain is Cytoplasmic. A helical membrane pass occupies residues 4-21 (LTLLLLVLLGWLQYSLWL). The Periplasmic segment spans residues 22-106 (GKNGIHDYVR…SRPSTPNNTQ (85 aa)). Residues 29 to 70 (YVRVKNDVAMQERNNSKLKARNDQLSAEIDDLTGGQEAIEER) adopt a coiled-coil conformation.

The protein belongs to the FtsB family. Part of a complex composed of FtsB, FtsL and FtsQ.

It localises to the cell inner membrane. Its function is as follows. Essential cell division protein. May link together the upstream cell division proteins, which are predominantly cytoplasmic, with the downstream cell division proteins, which are predominantly periplasmic. This Photorhabdus laumondii subsp. laumondii (strain DSM 15139 / CIP 105565 / TT01) (Photorhabdus luminescens subsp. laumondii) protein is Cell division protein FtsB.